The sequence spans 276 residues: 1-(5-phosphoribosyl)-5-[(5-phosphoribosylamino)methylideneamino] imidazole-4-carboxamide isomerase (276 aa).

Belongs to the HisA/HisF family.

Its subcellular location is the cytoplasm. The enzyme catalyses 1-(5-phospho-beta-D-ribosyl)-5-[(5-phospho-beta-D-ribosylamino)methylideneamino]imidazole-4-carboxamide = 5-[(5-phospho-1-deoxy-D-ribulos-1-ylimino)methylamino]-1-(5-phospho-beta-D-ribosyl)imidazole-4-carboxamide. Its pathway is amino-acid biosynthesis; L-histidine biosynthesis; L-histidine from 5-phospho-alpha-D-ribose 1-diphosphate: step 4/9. This Debaryomyces hansenii (strain ATCC 36239 / CBS 767 / BCRC 21394 / JCM 1990 / NBRC 0083 / IGC 2968) (Yeast) protein is 1-(5-phosphoribosyl)-5-[(5-phosphoribosylamino)methylideneamino] imidazole-4-carboxamide isomerase (HIS6).